The chain runs to 540 residues: NEDD8-activating enzyme E1 regulatory subunit AXR1 (540 aa).

The protein belongs to the ubiquitin-activating E1 family. ULA1 subfamily. Heterodimer of ECR1 and AXR1. The complex binds to RUB1/NEDD8 and RCE1. Expressed in shoot, root and floral meristems, in vascular tissues of cotyledons and mature leaves, and in the stele of the root. Expressed at higher levels on the lower side of an emerging root during germination and at higher levels on the underside of the apical hook.

The protein resides in the nucleus. The protein operates within protein modification; protein neddylation. Functionally, regulatory subunit of the dimeric ECR1-AXR1 E1 enzyme. E1 activates RUB1/NEDD8 by first adenylating its C-terminal glycine residue with ATP, thereafter linking this residue to the side chain of the catalytic cysteine, yielding a RUB1-ECR1 thioester and free AMP. E1 finally transfers RUB1 to the catalytic cysteine of RCE1. Plays an important role in auxin response. Regulates the chromosomal localization of meiotic recombination by crossovers (COs) and subsequent synapsis, probably through the activation of a CRL4 complex. Required for E3-mediated protein degradation in response to auxin, jasmonic acid and cold stress. Required for the COP1-COP10-CSN-mediated repression of photomorphogenesis in the dark. May function redundantly with AXL1 in the RUB conjugating pathway. Seems not to be functionally equivalent to AXL1 in vivo. The chain is NEDD8-activating enzyme E1 regulatory subunit AXR1 from Arabidopsis thaliana (Mouse-ear cress).